Here is a 1386-residue protein sequence, read N- to C-terminus: Restriction of telomere capping protein 1 (1386 aa).

A compositionally biased stretch (polar residues) spans 31–56 (LEGNSSASPTPSMNPKQHNKSGTSSS). Residues 31–58 (LEGNSSASPTPSMNPKQHNKSGTSSSNK) are disordered. 4 WD repeats span residues 180-227 (DHIR…NKPT), 234-278 (SHSD…GGYQ), 290-329 (FHTG…THQN), and 382-428 (NERE…IPKE). 2 stretches are compositionally biased toward low complexity: residues 595-606 (NPSFSNSVSPPF) and 649-663 (GNNN…VSGN). Disordered regions lie at residues 595-629 (NPSF…PPKP), 647-691 (EHGN…IQGY), 844-958 (TSTS…SQFG), 991-1021 (ASPI…SNHR), and 1090-1157 (SPNY…SRTE). Residues 669–690 (LNRNHSQSTQGSNVSLSSSIQG) show a composition bias toward polar residues. A compositionally biased stretch (low complexity) spans 859–872 (SNNIELSNANNNGS). 4 stretches are compositionally biased toward polar residues: residues 884 to 928 (SNLN…GSTR), 1006 to 1016 (TTSGSMSPQNK), 1090 to 1121 (SPNY…GSSR), and 1134 to 1145 (NKTSYAKQSPVS). Residues 1148-1157 (LMRDEQSRTE) are compositionally biased toward basic and acidic residues. Residues 1171-1212 (IEETKVTSVNFGKSELTRAITGNNTGSPNTLYKPWKTEYLLK) form a WD 5 repeat. The segment at 1338-1381 (CIYCDEPCKGLNIVTSLSCGHRGHFGCLREWFIDQENIVCPGGC) adopts an RING-type; degenerate zinc-finger fold.

Belongs to the WD repeat RTC1 family.

Its subcellular location is the vacuole. May be involved in a process influencing telomere capping. The chain is Restriction of telomere capping protein 1 (RTC1) from Debaryomyces hansenii (strain ATCC 36239 / CBS 767 / BCRC 21394 / JCM 1990 / NBRC 0083 / IGC 2968) (Yeast).